We begin with the raw amino-acid sequence, 99 residues long: NADH-quinone oxidoreductase subunit K (99 aa).

The next 3 helical transmembrane spans lie at 2-22, 28-48, and 60-80; these read PVEY…LGVL, LILM…FLAF, and IAFF…AVVI.

The protein belongs to the complex I subunit 4L family. In terms of assembly, NDH-1 is composed of 14 different subunits. Subunits NuoA, H, J, K, L, M, N constitute the membrane sector of the complex.

The protein localises to the cell inner membrane. It carries out the reaction a quinone + NADH + 5 H(+)(in) = a quinol + NAD(+) + 4 H(+)(out). NDH-1 shuttles electrons from NADH, via FMN and iron-sulfur (Fe-S) centers, to quinones in the respiratory chain. The immediate electron acceptor for the enzyme in this species is believed to be ubiquinone. Couples the redox reaction to proton translocation (for every two electrons transferred, four hydrogen ions are translocated across the cytoplasmic membrane), and thus conserves the redox energy in a proton gradient. The chain is NADH-quinone oxidoreductase subunit K from Anaeromyxobacter dehalogenans (strain 2CP-1 / ATCC BAA-258).